The following is a 328-amino-acid chain: Protease HtpX homolog (328 aa).

2 helical membrane-spanning segments follow: residues 6 to 26 (TAMLLAFMTALFMGVGYLIGG) and 28 to 48 (SGMMIAFVAAAGMNFFSYWNS). H130 provides a ligand contact to Zn(2+). E131 is a catalytic residue. H134 is a Zn(2+) binding site. Helical transmembrane passes span 145-165 (ITATLAGAISMLGNFAFFFGG) and 172-192 (PLGAIGVLAAMIVAPLAAMLV). A Zn(2+)-binding site is contributed by E201. The interval 279 to 328 (QYGGGTGPSVGTPTRSGSTGPAMTANPERKSRSVPNTGRGGSQPPKGPWS) is disordered. Residues 287 to 299 (SVGTPTRSGSTGP) show a composition bias toward low complexity.

Belongs to the peptidase M48B family. The cofactor is Zn(2+).

The protein localises to the cell inner membrane. The polypeptide is Protease HtpX homolog (Rhizobium rhizogenes (strain K84 / ATCC BAA-868) (Agrobacterium radiobacter)).